A 475-amino-acid chain; its full sequence is MSILFSSILFSIATFFSRILGLFRDVLFAKYFGVSYELDAYFIAIMFPFFLRKVFGEGAMSSAFVPLYSEKSGEEKDKFLSSVINGFSLIILALVILSYFFPELIINLFGAGSSHETKILAKKLLLITSPSIYFIFLWAISYSILNTNNKFFWPALTPSISNITIIIGTFLSTKYGIISPTIGFLIGSILMFFSIIKSIIKHKYYFTIKHFPHFLKLFFPTFMTMVVSQINTVVDMNVVSFYDKGSISYLQYASRFYLLPYGLFAVSVSTVVLSKISNDRKNFNYHLNDALKTTLFFTIPSMVGLIFLSTPIIRFFYEHGAFTSKDTLITSKILIAYTLGLPFYGIYSTISRSYHAIKNTKTPFIAATIVSLSNIILDIIFGLKYGPIGVALATSIAGIIGVLYLLFSVKTFPIKDFLKISLNSLIMLFVIYLTDFTDNEFWFLIQILIGILVYLIFSSIFYRDLIRRFLYARKK.

Over Met-1 to Ser-2 the chain is Cytoplasmic. Residues Ile-3–Phe-23 traverse the membrane as a helical segment. The Periplasmic portion of the chain corresponds to Arg-24 to Ser-35. The chain crosses the membrane as a helical span at residues Tyr-36–Gly-56. Topologically, residues Glu-57 to Lys-78 are cytoplasmic. The chain crosses the membrane as a helical span at residues Phe-79 to Tyr-99. The Periplasmic portion of the chain corresponds to Phe-100–Lys-123. The chain crosses the membrane as a helical span at residues Leu-124–Ile-144. The Cytoplasmic portion of the chain corresponds to Leu-145–Lys-150. The chain crosses the membrane as a helical span at residues Phe-151–Leu-171. Residues Ser-172 to Tyr-175 are Periplasmic-facing. The chain crosses the membrane as a helical span at residues Gly-176–Ile-196. Residues Lys-197 to His-213 are Cytoplasmic-facing. Residues Phe-214–Val-238 form a helical membrane-spanning segment. At Val-239–Tyr-249 the chain is on the periplasmic side. A helical transmembrane segment spans residues Leu-250–Val-271. Residues Val-272 to Leu-287 lie on the Cytoplasmic side of the membrane. Residues Asn-288 to Leu-308 traverse the membrane as a helical segment. The Periplasmic portion of the chain corresponds to Ser-309 to Lys-332. The helical transmembrane segment at Ile-333–Ser-353 threads the bilayer. Over Tyr-354–Thr-362 the chain is Cytoplasmic. The chain crosses the membrane as a helical span at residues Pro-363–Leu-383. Topologically, residues Lys-384–Gly-386 are periplasmic. A helical membrane pass occupies residues Pro-387–Phe-407. The Cytoplasmic segment spans residues Ser-408–Asp-416. Residues Phe-417 to Thr-437 form a helical membrane-spanning segment. At Asp-438–Glu-440 the chain is on the periplasmic side. The chain crosses the membrane as a helical span at residues Phe-441 to Phe-461. The Cytoplasmic segment spans residues Tyr-462–Lys-475.

This sequence belongs to the MurJ/MviN family.

Its subcellular location is the cell inner membrane. It participates in cell wall biogenesis; peptidoglycan biosynthesis. Its function is as follows. Involved in peptidoglycan biosynthesis. Transports lipid-linked peptidoglycan precursors from the inner to the outer leaflet of the cytoplasmic membrane. The protein is Lipid II flippase MurJ of Thermosipho africanus (strain TCF52B).